The following is a 1256-amino-acid chain: Pullulanase A (1256 aa).

The signal sequence occupies residues 1 to 44 (MRKTPSHTEKKMVYSIRSLKNGTGSVLIGASLVLLAMATPTISS). The disordered stretch occupies residues 42-117 (ISSDESTPTT…VTTETKAEEP (76 aa)). Low complexity predominate over residues 48-61 (TPTTNEPNNRNTTT). Residues 79–90 (DISSPRNANASL) show a composition bias toward polar residues. Residues 99–111 (TEPTTSTSPVTTE) are compositionally biased toward low complexity. Residues 141–143 (WTW), Trp-153, Asp-199, 248–250 (WYW), Trp-261, Lys-303, and Asn-308 contribute to the substrate site. Ca(2+)-binding residues include Ser-646 and Tyr-648. Substrate is bound by residues 652–653 (YD) and Phe-728. The active-site Nucleophile is the Asp-763. The active-site Proton donor is the Glu-792. Trp-794 serves as a coordination point for substrate. Met-813, Thr-816, and Asp-817 together coordinate Ca(2+). Residues Asp-824, Arg-827, and Tyr-834 each coordinate substrate. The Ca(2+) site is built by Asp-867 and Asp-871. Substrate is bound by residues Asn-881, Lys-954, and 974–976 (DSY). Ca(2+) is bound at residue Asp-977. The tract at residues 1126 to 1224 (SQNGTSHEST…TPDRQAELPN (99 aa)) is disordered. The span at 1134–1172 (STAEEKPDSTPSKPEHQDPAPEARPDSTKPDAKVADAEN) shows a compositional bias: basic and acidic residues. Residues 1181–1194 (SQAEQPAQEAQASS) are compositionally biased toward low complexity. Polar residues predominate over residues 1200–1210 (QNESVENSSKK). The short motif at 1222–1226 (LPNTG) is the LPXTG sorting signal element. Thr-1225 is modified (pentaglycyl murein peptidoglycan amidated threonine). Residues 1226-1256 (GIKNENKLLFAGISLLALLGLGFLLKNKKEN) constitute a propeptide, removed by sortase.

This sequence belongs to the glycosyl hydrolase 13 family.

The protein localises to the secreted. It is found in the cell wall. It localises to the cell surface. The enzyme catalyses Hydrolysis of (1-&gt;6)-alpha-D-glucosidic linkages in pullulan, amylopectin and glycogen, and in the alpha- and beta-limit dextrins of amylopectin and glycogen.. Inhibited by 4-O-alpha-D-glucopyranosylmoranoline (G1M). Its function is as follows. Virulence factor. Involved in the degradation of glycogen of the mammalian host cells. Hydrolyzes the alpha-1,6-branchpoints of glycogen. Hydrolyzes pullulan. Does not hydrolyze dextran. Binds to mouse lung alveolar type II cells that are rich in glycogen stores. Is an alpha-glucan-specific carbohydrate-binding protein, which binds to amylose (pure alpha-(1,4)-linked glucose), amylopectin (alpha-(1,4)-linked glucose with alpha-(1,6) branch points), pullulan (linear polymer of mixed alpha-(1,4)- and alpha-(1,6)-linked glucose) and glycogen (similar to amylopectin with more frequent alpha-(1,6) branch points) in vitro. Does not bind to dextran (a linear polymer of alpha-(1,6)-linked glucose). The sequence is that of Pullulanase A from Streptococcus pneumoniae serotype 2 (strain D39 / NCTC 7466).